The sequence spans 341 residues: L-threonine 3-dehydrogenase (341 aa).

Cys38 contacts Zn(2+). Catalysis depends on charge relay system residues Thr40 and His43. Positions 63, 64, 93, 96, 99, and 107 each coordinate Zn(2+). NAD(+)-binding positions include Ile175, Asp195, Arg200, 262–264, and 286–287; these read LGI and IY.

This sequence belongs to the zinc-containing alcohol dehydrogenase family. Homotetramer. Zn(2+) serves as cofactor.

The protein localises to the cytoplasm. The enzyme catalyses L-threonine + NAD(+) = (2S)-2-amino-3-oxobutanoate + NADH + H(+). It functions in the pathway amino-acid degradation; L-threonine degradation via oxydo-reductase pathway; glycine from L-threonine: step 1/2. In terms of biological role, catalyzes the NAD(+)-dependent oxidation of L-threonine to 2-amino-3-ketobutyrate. This is L-threonine 3-dehydrogenase from Salmonella gallinarum (strain 287/91 / NCTC 13346).